A 289-amino-acid chain; its full sequence is Formamidopyrimidine-DNA glycosylase 1 (289 aa).

P2 functions as the Schiff-base intermediate with DNA in the catalytic mechanism. The active-site Proton donor is E3. K61 (proton donor; for beta-elimination activity) is an active-site residue. Positions 100, 119, and 165 each coordinate DNA. Residues 251-285 (DAYGREGENCRRCGAVIRRERFMNRSSFYCPRCQP) form an FPG-type zinc finger. The active-site Proton donor; for delta-elimination activity is R275.

Belongs to the FPG family. Monomer. Zn(2+) is required as a cofactor.

It catalyses the reaction Hydrolysis of DNA containing ring-opened 7-methylguanine residues, releasing 2,6-diamino-4-hydroxy-5-(N-methyl)formamidopyrimidine.. The enzyme catalyses 2'-deoxyribonucleotide-(2'-deoxyribose 5'-phosphate)-2'-deoxyribonucleotide-DNA = a 3'-end 2'-deoxyribonucleotide-(2,3-dehydro-2,3-deoxyribose 5'-phosphate)-DNA + a 5'-end 5'-phospho-2'-deoxyribonucleoside-DNA + H(+). In terms of biological role, involved in base excision repair of DNA damaged by oxidation or by mutagenic agents. Acts as a DNA glycosylase that recognizes and removes damaged bases. Has a preference for oxidized purines, such as 7,8-dihydro-8-oxoguanine (8-oxoG) when paired with C, G or T, as well as methyl-faPy (formanidopyrimidine residues) in poly(dG-dC) and spiroiminodihydantoin:C base pairs. Unlike its E.coli ortholog has no activity on 8-oxoG:A. Has AP (apurinic/apyrimidinic) lyase activity and introduces nicks in the DNA strand. Cleaves the DNA backbone by beta-delta elimination to generate a single-strand break at the site of the removed base with both 3'- and 5'-phosphates. Cleaves ssDNA containing an AP site. Complements the H(2)O(2) sensitivity of an M.smegmatis fpg disruption mutant; upon expression in M.smegmatis excises 8-oxoG from dsDNA. The chain is Formamidopyrimidine-DNA glycosylase 1 (fpg1) from Mycobacterium tuberculosis (strain ATCC 25618 / H37Rv).